We begin with the raw amino-acid sequence, 73 residues long: Sec-independent protein translocase protein TatA (73 aa).

A helical transmembrane segment spans residues 1–21 (MGSFSIWHWLIVLVIVMLVFG). The tract at residues 43–73 (MKEGDDKAAPAKELRDSTTIDVDAKEKTRQQ) is disordered.

This sequence belongs to the TatA/E family. As to quaternary structure, the Tat system comprises two distinct complexes: a TatABC complex, containing multiple copies of TatA, TatB and TatC subunits, and a separate TatA complex, containing only TatA subunits. Substrates initially bind to the TatABC complex, which probably triggers association of the separate TatA complex to form the active translocon.

The protein resides in the cell inner membrane. Functionally, part of the twin-arginine translocation (Tat) system that transports large folded proteins containing a characteristic twin-arginine motif in their signal peptide across membranes. TatA could form the protein-conducting channel of the Tat system. The protein is Sec-independent protein translocase protein TatA of Cupriavidus pinatubonensis (strain JMP 134 / LMG 1197) (Cupriavidus necator (strain JMP 134)).